The following is a 693-amino-acid chain: Cyclin-dependent kinase G-1 (693 aa).

The span at 1 to 10 (MAAGSHGGYR) shows a compositional bias: gly residues. 2 disordered regions span residues 1–148 (MAAG…ARDP) and 236–308 (KKKK…DDYP). Positions 13-24 (EVAREREHDVGV) are enriched in basic and acidic residues. Residues 26 to 39 (RRSKEHYHHRHPSR) show a composition bias toward basic residues. Composition is skewed to basic and acidic residues over residues 40–54 (HRDS…RSGG), 75–87 (RPSE…REPG), and 97–122 (RSGE…EEAK). The segment covering 268-284 (SVRSSSRSSDSGVLQGS) has biased composition (low complexity). A compositionally biased stretch (basic and acidic residues) spans 287-304 (RDLEVEKGDNIDVEKAAD). Positions 349–640 (FERLNTINEG…AEDALNHEWF (292 aa)) constitute a Protein kinase domain. Residues 355–363 (INEGTYGVV) and lysine 378 contribute to the ATP site. At threonine 359 the chain carries Phosphothreonine. Tyrosine 360 is modified (phosphotyrosine). The Proton acceptor role is filled by aspartate 473. Residue serine 500 is modified to Phosphoserine. Threonine 506 carries the post-translational modification Phosphothreonine. A disordered region spans residues 664–693 (RFKKHMKSPDPLEEQWMKEQGNNGDRGLFG).

This sequence belongs to the protein kinase superfamily. CMGC Ser/Thr protein kinase family. CDC2/CDKX subfamily.

The catalysed reaction is L-seryl-[protein] + ATP = O-phospho-L-seryl-[protein] + ADP + H(+). It catalyses the reaction L-threonyl-[protein] + ATP = O-phospho-L-threonyl-[protein] + ADP + H(+). The enzyme catalyses [DNA-directed RNA polymerase] + ATP = phospho-[DNA-directed RNA polymerase] + ADP + H(+). The chain is Cyclin-dependent kinase G-1 (CDKG-1) from Oryza sativa subsp. indica (Rice).